Here is a 186-residue protein sequence, read N- to C-terminus: MDEIQKQLDKSDQLMQKACTHTQIEFSKIRAGRAMPDMLDGISILYYNAMTPLNQVAAITTPDARTLVIKPWERKCIQEIEKAIVNSKLGLNPQNDGEVVRIIVPPLTEERRKDLVKQAKNEAEKGKISIRNIRKDIKETFKHLQKDGASEDTIKRAEEKLQNLTDKHIHNIDNLLTHKEAEILEV.

Belongs to the RRF family.

It localises to the cytoplasm. In terms of biological role, responsible for the release of ribosomes from messenger RNA at the termination of protein biosynthesis. May increase the efficiency of translation by recycling ribosomes from one round of translation to another. This is Ribosome-recycling factor from Amoebophilus asiaticus (strain 5a2).